A 229-amino-acid chain; its full sequence is Large ribosomal subunit protein bL19cy (229 aa).

A chloroplast-targeting transit peptide spans 1-70 (MATSSHLLPQ…DSKKRKEFIA (70 aa)).

Belongs to the bacterial ribosomal protein bL19 family. As to quaternary structure, part of the 50S ribosomal subunit.

The protein localises to the plastid. It is found in the chloroplast. Located at the 30S-50S ribosomal subunit interface and binds directly to 23S ribosomal RNA. The polypeptide is Large ribosomal subunit protein bL19cy (Arabidopsis thaliana (Mouse-ear cress)).